Here is a 48-residue protein sequence, read N- to C-terminus: Acidic phospholipase A2 (48 aa).

Positions 27, 29, and 31 each coordinate Ca(2+). Cysteine 28 and cysteine 44 form a disulfide bridge. The active site involves histidine 47. Aspartate 48 provides a ligand contact to Ca(2+).

The protein belongs to the phospholipase A2 family. Group II subfamily. D49 sub-subfamily. Monomer. It depends on Ca(2+) as a cofactor. In terms of tissue distribution, expressed by the venom gland.

The protein resides in the secreted. The catalysed reaction is a 1,2-diacyl-sn-glycero-3-phosphocholine + H2O = a 1-acyl-sn-glycero-3-phosphocholine + a fatty acid + H(+). With respect to regulation, inhibited by EDTA. Inhibited by Ba(2+), Cu(+), Fe(2+) and Zn(2+) ions and, to a lesser extent, by Mn(2+) and Mg(2+) ions. Functionally, snake venom phospholipase A2 (PLA2) that shows myotoxicity and induces paw edema in mice. Exhibits indirect hemolytic activity. Inhibits platelet aggregation induced by ADP and collagen. PLA2 catalyzes the calcium-dependent hydrolysis of the 2-acyl groups in 3-sn-phosphoglycerides. The polypeptide is Acidic phospholipase A2 (Bothrops pauloensis (Neuwied's lancehead)).